Reading from the N-terminus, the 489-residue chain is Aspartate/glutamate permease AcaP (489 aa).

12 consecutive transmembrane segments (helical) span residues 6–26 (IRWFTVAFIAFNMVWGMGNVV), 36–56 (VVTSWLLILALYFIPYALIVG), 91–111 (VVHIPYLAQKPQAILIAFGWV), 122–142 (MSMTAVALISLAIFLAFLWLS), 152–172 (IGGLAGTAMFVMSLLFIVMAI), 195–215 (IPKFDFSYFTTISMLVFAVGG), 238–258 (FLLAGMVGICAVLGSIAMGMI), 290–310 (LMIVYALTNGVGQIAALAFSI), 342–362 (GYTLTGILVSIIILLPLLGIG), 373–393 (NLNSVVMPMRYLWVFFAFIML), 413–433 (AMIAGAWCFLFTLIACVLGMV), and 449–469 (LASNILTPIVLILLGMLLPFI).

It belongs to the amino acid-polyamine-organocation (APC) superfamily. Glutamate:GABA antiporter (GGA) (TC 2.A.3.7) family.

The protein localises to the cell membrane. Involved in aspartate and glutamate uptake. Plays no significant role in the excretion of accumulated glutamate. This Lactococcus lactis subsp. cremoris (strain MG1363) protein is Aspartate/glutamate permease AcaP.